Here is a 403-residue protein sequence, read N- to C-terminus: Probable protein phosphatase 2C 8 (403 aa).

Residues 42–80 (LGRTASAVAEDDAAKRVRPASDSSSDSSESAKVAPEPTA) are disordered. A compositionally biased stretch (low complexity) spans 62–71 (SDSSSDSSES). The PPM-type phosphatase domain occupies 90 to 388 (SHGAVSVIGR…DNISVVVVEL (299 aa)). Mn(2+)-binding residues include aspartate 144, glycine 145, aspartate 325, and aspartate 379.

Belongs to the PP2C family. It depends on Mg(2+) as a cofactor. Mn(2+) is required as a cofactor.

The enzyme catalyses O-phospho-L-seryl-[protein] + H2O = L-seryl-[protein] + phosphate. It carries out the reaction O-phospho-L-threonyl-[protein] + H2O = L-threonyl-[protein] + phosphate. The polypeptide is Probable protein phosphatase 2C 8 (Oryza sativa subsp. japonica (Rice)).